The sequence spans 343 residues: GTPase Obg (343 aa).

The Obg domain occupies methionine 1–leucine 159. Residues alanine 160–glutamate 334 form the OBG-type G domain. GTP-binding positions include glycine 166–serine 173, phenylalanine 191–tyrosine 195, aspartate 213–glycine 216, asparagine 284–aspartate 287, and serine 315–leucine 317. Positions 173 and 193 each coordinate Mg(2+).

Belongs to the TRAFAC class OBG-HflX-like GTPase superfamily. OBG GTPase family. Monomer. Requires Mg(2+) as cofactor.

It localises to the cytoplasm. Functionally, an essential GTPase which binds GTP, GDP and possibly (p)ppGpp with moderate affinity, with high nucleotide exchange rates and a fairly low GTP hydrolysis rate. Plays a role in control of the cell cycle, stress response, ribosome biogenesis and in those bacteria that undergo differentiation, in morphogenesis control. This chain is GTPase Obg, found in Nitrosomonas eutropha (strain DSM 101675 / C91 / Nm57).